A 97-amino-acid chain; its full sequence is Large ribosomal subunit protein uL23 (97 aa).

Belongs to the universal ribosomal protein uL23 family. As to quaternary structure, part of the 50S ribosomal subunit. Contacts protein L29, and trigger factor when it is bound to the ribosome.

Its function is as follows. One of the early assembly proteins it binds 23S rRNA. One of the proteins that surrounds the polypeptide exit tunnel on the outside of the ribosome. Forms the main docking site for trigger factor binding to the ribosome. In Clostridium perfringens (strain SM101 / Type A), this protein is Large ribosomal subunit protein uL23.